The sequence spans 233 residues: MAKKGKKYQESAKLIDRTVEYKLDEASKLVVETAKAKFDESVELHAKLGVDSRHADQQVRGTIVLPHGTGKDQKVAVFAKGEKAEEAKAAGADFVGAEDLAEKIQKEGWLGFDVAVATPDMMGVVGRIGRILGPQGLMPNPKAGTVTMDVTSAIKEIKAGKVEYRTDKSNIIHVPVGKVSFGEEKIAENINALMQAILKAKPASSKGKYIRSLTIASTMGPGIKVNPLQFAKE.

The protein belongs to the universal ribosomal protein uL1 family. Part of the 50S ribosomal subunit.

Functionally, binds directly to 23S rRNA. The L1 stalk is quite mobile in the ribosome, and is involved in E site tRNA release. Protein L1 is also a translational repressor protein, it controls the translation of the L11 operon by binding to its mRNA. This is Large ribosomal subunit protein uL1 from Finegoldia magna (strain ATCC 29328 / DSM 20472 / WAL 2508) (Peptostreptococcus magnus).